The chain runs to 191 residues: Potassium-transporting ATPase KdpC subunit (191 aa).

A helical transmembrane segment spans residues 10-30; it reads ITLVFCVFFSVFYILVLWLFA.

This sequence belongs to the KdpC family. In terms of assembly, the system is composed of three essential subunits: KdpA, KdpB and KdpC.

The protein resides in the cell inner membrane. Its function is as follows. Part of the high-affinity ATP-driven potassium transport (or Kdp) system, which catalyzes the hydrolysis of ATP coupled with the electrogenic transport of potassium into the cytoplasm. This subunit acts as a catalytic chaperone that increases the ATP-binding affinity of the ATP-hydrolyzing subunit KdpB by the formation of a transient KdpB/KdpC/ATP ternary complex. The protein is Potassium-transporting ATPase KdpC subunit of Bacteroides fragilis (strain ATCC 25285 / DSM 2151 / CCUG 4856 / JCM 11019 / LMG 10263 / NCTC 9343 / Onslow / VPI 2553 / EN-2).